We begin with the raw amino-acid sequence, 329 residues long: DNA-directed RNA polymerase subunit alpha (329 aa).

The segment at 1–234 (MQGSVTEFLK…EQLDAFVELR (234 aa)) is alpha N-terminal domain (alpha-NTD). The tract at residues 248 to 329 (FDPILLRPVD…WPPASLADDL (82 aa)) is alpha C-terminal domain (alpha-CTD).

Belongs to the RNA polymerase alpha chain family. As to quaternary structure, homodimer. The RNAP catalytic core consists of 2 alpha, 1 beta, 1 beta' and 1 omega subunit. When a sigma factor is associated with the core the holoenzyme is formed, which can initiate transcription.

It catalyses the reaction RNA(n) + a ribonucleoside 5'-triphosphate = RNA(n+1) + diphosphate. DNA-dependent RNA polymerase catalyzes the transcription of DNA into RNA using the four ribonucleoside triphosphates as substrates. This chain is DNA-directed RNA polymerase subunit alpha, found in Shewanella loihica (strain ATCC BAA-1088 / PV-4).